The sequence spans 384 residues: Chaperone protein DnaJ (384 aa).

One can recognise a J domain in the interval 6 to 71 (DYYEVLGISK…TKRKTYDQFG (66 aa)). Residues 141-223 (GKKMSIKVNR…CHGTGNTRKV (83 aa)) form a CR-type zinc finger. Residues Cys154, Cys157, Cys171, Cys174, Cys197, Cys200, Cys211, and Cys214 each coordinate Zn(2+). CXXCXGXG motif repeat units follow at residues 154-161 (CEECNGTG), 171-178 (CSTCNGTG), 197-204 (CSACNGTG), and 211-218 (CSKCHGTG).

This sequence belongs to the DnaJ family. As to quaternary structure, homodimer. The cofactor is Zn(2+).

It is found in the cytoplasm. Functionally, participates actively in the response to hyperosmotic and heat shock by preventing the aggregation of stress-denatured proteins and by disaggregating proteins, also in an autonomous, DnaK-independent fashion. Unfolded proteins bind initially to DnaJ; upon interaction with the DnaJ-bound protein, DnaK hydrolyzes its bound ATP, resulting in the formation of a stable complex. GrpE releases ADP from DnaK; ATP binding to DnaK triggers the release of the substrate protein, thus completing the reaction cycle. Several rounds of ATP-dependent interactions between DnaJ, DnaK and GrpE are required for fully efficient folding. Also involved, together with DnaK and GrpE, in the DNA replication of plasmids through activation of initiation proteins. This Clostridioides difficile (strain 630) (Peptoclostridium difficile) protein is Chaperone protein DnaJ.